A 394-amino-acid chain; its full sequence is Cytochrome b (394 aa).

Helical transmembrane passes span 39-59 (FGSL…FLAM), 83-105 (WLLR…LHTF), 120-140 (VWCL…IGYV), and 186-206 (FFSL…LHLA). Heme b contacts are provided by His-89 and His-103. Heme b contacts are provided by His-191 and His-204. His-209 serves as a coordination point for a ubiquinone. Transmembrane regions (helical) follow at residues 232–252 (FYVK…IWIF), 296–316 (AGGV…PFFK), 328–348 (IYQG…WIGC), and 355–374 (FVTI…AITP).

It belongs to the cytochrome b family. The main subunits of complex b-c1 are: cytochrome b, cytochrome c1 and the Rieske protein. Heme b serves as cofactor.

It is found in the mitochondrion inner membrane. Functionally, component of the ubiquinol-cytochrome c reductase complex (complex III or cytochrome b-c1 complex) that is part of the mitochondrial respiratory chain. The b-c1 complex mediates electron transfer from ubiquinol to cytochrome c. Contributes to the generation of a proton gradient across the mitochondrial membrane that is then used for ATP synthesis. This chain is Cytochrome b (MT-CYB), found in Oenothera berteroana (Bertero's evening primrose).